Consider the following 318-residue polypeptide: 2-keto-3-deoxygluconate permease (318 aa).

The next 10 membrane-spanning stretches (helical) occupy residues 10–30 (LPGG…TLWP), 42–62 (GLIS…GATI), 82–102 (IAMA…GGVP), 109–129 (LSVL…YAAL), 139–159 (AGAV…LILG), 163–183 (LASF…LGFA), 194–214 (FFAQ…GNTL), 224–244 (ASGV…LLLA), 257–277 (VAAS…AGMA), and 289–309 (ALVA…TALY).

This sequence belongs to the KdgT transporter family.

The protein localises to the cell inner membrane. The catalysed reaction is 2-dehydro-3-deoxy-D-gluconate(in) + H(+)(in) = 2-dehydro-3-deoxy-D-gluconate(out) + H(+)(out). Functionally, catalyzes the proton-dependent uptake of 2-keto-3-deoxygluconate (KDG) into the cell. The chain is 2-keto-3-deoxygluconate permease from Xanthomonas euvesicatoria pv. vesicatoria (strain 85-10) (Xanthomonas campestris pv. vesicatoria).